The following is a 204-amino-acid chain: Holliday junction branch migration complex subunit RuvA (204 aa).

A domain I region spans residues 1–64 (MFAFLRGELV…EDLQQLFGFL (64 aa)). Residues 65 to 143 (DEEELQLFRL…KIQPTSSAKA (79 aa)) are domain II. Residues 144-151 (GAPSAVLS) are flexible linker. The domain III stretch occupies residues 151 to 204 (SATQLIDDAVAALTTLGFPKASAQKAVSKVLETTPGLSVEELVRTSLAAMHNNL).

Belongs to the RuvA family. In terms of assembly, homotetramer. Forms an RuvA(8)-RuvB(12)-Holliday junction (HJ) complex. HJ DNA is sandwiched between 2 RuvA tetramers; dsDNA enters through RuvA and exits via RuvB. An RuvB hexamer assembles on each DNA strand where it exits the tetramer. Each RuvB hexamer is contacted by two RuvA subunits (via domain III) on 2 adjacent RuvB subunits; this complex drives branch migration. In the full resolvosome a probable DNA-RuvA(4)-RuvB(12)-RuvC(2) complex forms which resolves the HJ.

It is found in the cytoplasm. Its function is as follows. The RuvA-RuvB-RuvC complex processes Holliday junction (HJ) DNA during genetic recombination and DNA repair, while the RuvA-RuvB complex plays an important role in the rescue of blocked DNA replication forks via replication fork reversal (RFR). RuvA specifically binds to HJ cruciform DNA, conferring on it an open structure. The RuvB hexamer acts as an ATP-dependent pump, pulling dsDNA into and through the RuvAB complex. HJ branch migration allows RuvC to scan DNA until it finds its consensus sequence, where it cleaves and resolves the cruciform DNA. The protein is Holliday junction branch migration complex subunit RuvA of Chlorobaculum parvum (strain DSM 263 / NCIMB 8327) (Chlorobium vibrioforme subsp. thiosulfatophilum).